The chain runs to 576 residues: Potassium-transporting ATPase potassium-binding subunit (576 aa).

Transmembrane regions (helical) follow at residues 3–23 (IFLD…ISPI), 68–88 (LYAL…TLLF), 137–157 (GLAL…LVLI), 179–199 (ILYV…SQGV), 267–287 (FEAF…GYMI), 294–314 (WFLY…QYYF), 339–359 (FGIG…CGAV), 369–389 (LGGL…GGVG), 391–411 (GLYG…LMIG), 430–450 (VVIT…ALYT), 495–515 (ITTG…VFYM), and 537–557 (LVFG…TFLP).

It belongs to the KdpA family. In terms of assembly, the system is composed of three essential subunits: KdpA, KdpB and KdpC.

It is found in the cell inner membrane. Part of the high-affinity ATP-driven potassium transport (or Kdp) system, which catalyzes the hydrolysis of ATP coupled with the electrogenic transport of potassium into the cytoplasm. This subunit binds the periplasmic potassium ions and delivers the ions to the membrane domain of KdpB through an intramembrane tunnel. The chain is Potassium-transporting ATPase potassium-binding subunit from Hydrogenobaculum sp. (strain Y04AAS1).